Consider the following 345-residue polypeptide: Centromere protein U (345 aa).

Basic residues-rich tracts occupy residues 1–10 (MSSKKRTKRN) and 19–29 (HKGRSHPRRKF). Disordered stretches follow at residues 1–37 (MSSKKRTKRNRAGDEYKEHKGRSHPRRKFLPPEEPDV) and 64–153 (AVDA…SSVQ). Over residues 88-106 (NAERSEKMLLETPEGDVHE) the composition is skewed to basic and acidic residues. Residues 142 to 152 (SDSSVNSPSSV) show a composition bias toward low complexity. Residues 201 to 294 (CSAFEDQVTD…QDYLDYREEN (94 aa)) adopt a coiled-coil conformation. A Nuclear localization signal motif is present at residues 222-239 (KKKNAKVVADIKKKRQRL).

The protein belongs to the CENP-U/AME1 family. In terms of assembly, interacts with CENPH-CENPI complex at the kinetochore.

Its subcellular location is the nucleus. The protein resides in the chromosome. It localises to the centromere. Its function is as follows. Probable component of a centromeric complex involved in assembly of kinetochore proteins, mitotic progression and chromosome segregation. Required for maintenance of sister chromatid adhesion during mitotic checkpoint activation. In Gallus gallus (Chicken), this protein is Centromere protein U (CENPU).